The chain runs to 428 residues: Chaperone SurA (428 aa).

The signal sequence occupies residues 1–19 (MNIWKTLLLGMLVTGSAVS). PpiC domains lie at 170–268 (SVEY…KIED) and 277–377 (VTEV…EVLD).

Its subcellular location is the periplasm. The enzyme catalyses [protein]-peptidylproline (omega=180) = [protein]-peptidylproline (omega=0). Its function is as follows. Chaperone involved in the correct folding and assembly of outer membrane proteins. Recognizes specific patterns of aromatic residues and the orientation of their side chains, which are found more frequently in integral outer membrane proteins. May act in both early periplasmic and late outer membrane-associated steps of protein maturation. This is Chaperone SurA from Vibrio vulnificus (strain YJ016).